We begin with the raw amino-acid sequence, 425 residues long: Serine--tRNA ligase (425 aa).

L-serine is bound at residue 230–232 (TAE). Position 261–263 (261–263 (RSE)) interacts with ATP. Glu-284 contacts L-serine. Residue 348 to 351 (EISS) coordinates ATP. Position 384 (Ser-384) interacts with L-serine.

The protein belongs to the class-II aminoacyl-tRNA synthetase family. Type-1 seryl-tRNA synthetase subfamily. In terms of assembly, homodimer. The tRNA molecule binds across the dimer.

Its subcellular location is the cytoplasm. It catalyses the reaction tRNA(Ser) + L-serine + ATP = L-seryl-tRNA(Ser) + AMP + diphosphate + H(+). The catalysed reaction is tRNA(Sec) + L-serine + ATP = L-seryl-tRNA(Sec) + AMP + diphosphate + H(+). It participates in aminoacyl-tRNA biosynthesis; selenocysteinyl-tRNA(Sec) biosynthesis; L-seryl-tRNA(Sec) from L-serine and tRNA(Sec): step 1/1. Its function is as follows. Catalyzes the attachment of serine to tRNA(Ser). Is also able to aminoacylate tRNA(Sec) with serine, to form the misacylated tRNA L-seryl-tRNA(Sec), which will be further converted into selenocysteinyl-tRNA(Sec). The sequence is that of Serine--tRNA ligase from Streptococcus gordonii (strain Challis / ATCC 35105 / BCRC 15272 / CH1 / DL1 / V288).